A 591-amino-acid polypeptide reads, in one-letter code: L-fucose isomerase (591 aa).

Active-site proton acceptor residues include E337 and D361. Positions 337, 361, and 528 each coordinate Mn(2+).

It belongs to the L-fucose isomerase family. In terms of assembly, homohexamer. Mn(2+) is required as a cofactor.

Its subcellular location is the cytoplasm. It carries out the reaction L-fucose = L-fuculose. Its pathway is carbohydrate degradation; L-fucose degradation; L-lactaldehyde and glycerone phosphate from L-fucose: step 1/3. Functionally, converts the aldose L-fucose into the corresponding ketose L-fuculose. In Escherichia coli (strain ATCC 8739 / DSM 1576 / NBRC 3972 / NCIMB 8545 / WDCM 00012 / Crooks), this protein is L-fucose isomerase.